We begin with the raw amino-acid sequence, 1328 residues long: ATP-dependent DNA helicase hus2/rqh1 (1328 aa).

Low complexity-rich tracts occupy residues 217 to 236 (NNLP…NDNN) and 244 to 254 (ASPTPSSVSSQ). The interval 217–254 (NNLPFPRLNNNNTNNNNDNNAIEKRDSASPTPSSVSSQ) is disordered. The 180-residue stretch at 528–707 (INGTLSGKDV…INTLRMENCL (180 aa)) folds into the Helicase ATP-binding domain. 555–562 (AVIEGGAS) provides a ligand contact to ATP. The DEAH box motif lies at 651–654 (DEAH). The region spanning 728–876 (LYTELYRFIS…ETKERQRQML (149 aa)) is the Helicase C-terminal domain. In terms of domain architecture, HRDC spans 1115–1195 (IDVMTRCLKD…QKFIDEKEQN (81 aa)). Disordered stretches follow at residues 1224–1247 (EQGF…GDEE) and 1260–1328 (NSQS…QNYR). Positions 1260 to 1269 (NSQSLTQTGS) are enriched in polar residues. Positions 1283–1300 (KSYRHKRGSTSYSRKRKY) are enriched in basic residues.

The protein belongs to the helicase family. RecQ subfamily. In terms of assembly, interacts with top3.

Its subcellular location is the nucleus. The catalysed reaction is Couples ATP hydrolysis with the unwinding of duplex DNA by translocating in the 3'-5' direction.. It carries out the reaction ATP + H2O = ADP + phosphate + H(+). Its function is as follows. ATP-dependent 3'-5' DNA-helicase. Has a role in the repair of UV-induced DNA damage in G2 via recombination-mediated repair. Also has a role in the repair of infrared-induced double DNA strand breaks. The chain is ATP-dependent DNA helicase hus2/rqh1 from Schizosaccharomyces pombe (strain 972 / ATCC 24843) (Fission yeast).